Reading from the N-terminus, the 239-residue chain is 2,3,4,5-tetrahydropyridine-2,6-dicarboxylate N-acetyltransferase (239 aa).

It belongs to the transferase hexapeptide repeat family. DapH subfamily.

It catalyses the reaction (S)-2,3,4,5-tetrahydrodipicolinate + acetyl-CoA + H2O = L-2-acetamido-6-oxoheptanedioate + CoA. It participates in amino-acid biosynthesis; L-lysine biosynthesis via DAP pathway; LL-2,6-diaminopimelate from (S)-tetrahydrodipicolinate (acetylase route): step 1/3. In terms of biological role, catalyzes the transfer of an acetyl group from acetyl-CoA to tetrahydrodipicolinate. This Staphylococcus carnosus (strain TM300) protein is 2,3,4,5-tetrahydropyridine-2,6-dicarboxylate N-acetyltransferase.